The chain runs to 245 residues: 2,3-bisphosphoglycerate-dependent phosphoglycerate mutase (245 aa).

Residues 8 to 15 (RHGQSLWN), 21 to 22 (TG), Arg60, 87 to 90 (ERHY), Lys98, 114 to 115 (RR), and 183 to 184 (GN) contribute to the substrate site. Residue His9 is the Tele-phosphohistidine intermediate of the active site. Glu87 (proton donor/acceptor) is an active-site residue.

Belongs to the phosphoglycerate mutase family. BPG-dependent PGAM subfamily.

It carries out the reaction (2R)-2-phosphoglycerate = (2R)-3-phosphoglycerate. It functions in the pathway carbohydrate degradation; glycolysis; pyruvate from D-glyceraldehyde 3-phosphate: step 3/5. Functionally, catalyzes the interconversion of 2-phosphoglycerate and 3-phosphoglycerate. This chain is 2,3-bisphosphoglycerate-dependent phosphoglycerate mutase, found in Bacillus cereus (strain ATCC 14579 / DSM 31 / CCUG 7414 / JCM 2152 / NBRC 15305 / NCIMB 9373 / NCTC 2599 / NRRL B-3711).